Reading from the N-terminus, the 251-residue chain is Acidic leucine-rich nuclear phosphoprotein 32 family member B (251 aa).

LRR repeat units lie at residues 16–40 (PAAV…LTAE), 43–64 (NLEF…PKLP), and 65–84 (KLKK…DMLA). Lysine 86 is modified (N6-acetyllysine). Residues 89–110 (NLTHLNLSGNKLKDISTLEPLK) form an LRR 4 repeat. One can recognise an LRRCT domain in the interval 123–161 (CEVTNLNDYRESVFKLLPQLTYLDGYDREDQEAPDSDAE). Positions 149–233 (DREDQEAPDS…DEDEDEEEEE (85 aa)) are enriched in acidic residues. Residues 149–251 (DREDQEAPDS…RETDDEGEDD (103 aa)) form a disordered region. Serine 158 carries the phosphoserine modification. A compositionally biased stretch (basic and acidic residues) spans 234–244 (GGKGEKRKRET). Positions 239 to 242 (KRKR) match the Nuclear localization signal motif. Residue threonine 244 is modified to Phosphothreonine.

The protein belongs to the ANP32 family. In terms of assembly, interacts with histones H3 and H4. Interacts with KLF5; this interaction induces promoter region-specific histone incorporation and inhibition of histone acetylation by ANP32B. (Microbial infection) Interacts with Sendai virus protein M. As to quaternary structure, (Microbial infection) Interacts with Measles virus protein M. In terms of assembly, (Microbial infection) Interacts with Hendra virus protein M; this interaction promotes nuclear localization of M. (Microbial infection) Interacts with influenza virus B protein PB2; this interaction strongly supports influenza B virus replication. Post-translationally, some glutamate residues are glycylated by TTLL8. This modification occurs exclusively on glutamate residues and results in a glycine chain on the gamma-carboxyl group. Directly cleaved by caspase-3/CASP3. Expressed in heart, lung, pancreas, prostate and in spleen, thymus and placenta.

The protein resides in the nucleus. It is found in the cytoplasm. Functionally, multifunctional protein that is involved in the regulation of many processes including cell proliferation, apoptosis, cell cycle progression or transcription. Regulates the proliferation of neuronal stem cells, differentiation of leukemic cells and progression from G1 to S phase of the cell cycle. As negative regulator of caspase-3-dependent apoptosis, may act as an antagonist of ANP32A in regulating tissue homeostasis. Exhibits histone chaperone properties, able to recruit histones to certain promoters, thus regulating the transcription of specific genes. Also plays an essential role in the nucleocytoplasmic transport of specific mRNAs via the uncommon nuclear mRNA export receptor XPO1/CRM1. Participates in the regulation of adequate adaptive immune responses by acting on mRNA expression and cell proliferation. Its function is as follows. (Microbial infection) Plays an essential role in influenza A and B viral genome replication. Also plays a role in foamy virus mRNA export from the nucleus to the cytoplasm. This Homo sapiens (Human) protein is Acidic leucine-rich nuclear phosphoprotein 32 family member B (ANP32B).